Consider the following 469-residue polypeptide: Probable periplasmic serine endoprotease DegP-like (469 aa).

Residues 1 to 25 (MNRLLKQVCMVVVSSFMMASMLTHA) form the signal peptide. Active-site charge relay system residues include His-114, Asp-144, and Ser-217. Substrate is bound by residues 215 to 217 (GNS) and 272 to 276 (LGVLI). 2 consecutive PDZ domains span residues 261–352 (LKSD…YRDG) and 358–458 (SVTL…IRQG).

This sequence belongs to the peptidase S1C family.

Its subcellular location is the periplasm. It catalyses the reaction Acts on substrates that are at least partially unfolded. The cleavage site P1 residue is normally between a pair of hydrophobic residues, such as Val-|-Val.. In terms of biological role, might be efficient in the degradation of transiently denatured and unfolded proteins which accumulate in the periplasm following stress conditions. This chain is Probable periplasmic serine endoprotease DegP-like, found in Marinomonas sp. (strain MWYL1).